A 374-amino-acid chain; its full sequence is Phosphoserine aminotransferase (374 aa).

Position 46 (Arg46) interacts with L-glutamate. Pyridoxal 5'-phosphate contacts are provided by residues 80–81, Phe104, Thr150, Asp174, and Gln197; that span reads AT. Lys198 is modified (N6-(pyridoxal phosphate)lysine). Pyridoxal 5'-phosphate is bound at residue 249–250; the sequence is NT.

This sequence belongs to the class-V pyridoxal-phosphate-dependent aminotransferase family. SerC subfamily. Homodimer. Pyridoxal 5'-phosphate is required as a cofactor.

It is found in the cytoplasm. The catalysed reaction is O-phospho-L-serine + 2-oxoglutarate = 3-phosphooxypyruvate + L-glutamate. It carries out the reaction 4-(phosphooxy)-L-threonine + 2-oxoglutarate = (R)-3-hydroxy-2-oxo-4-phosphooxybutanoate + L-glutamate. The protein operates within amino-acid biosynthesis; L-serine biosynthesis; L-serine from 3-phospho-D-glycerate: step 2/3. Its pathway is cofactor biosynthesis; pyridoxine 5'-phosphate biosynthesis; pyridoxine 5'-phosphate from D-erythrose 4-phosphate: step 3/5. In terms of biological role, catalyzes the reversible conversion of 3-phosphohydroxypyruvate to phosphoserine and of 3-hydroxy-2-oxo-4-phosphonooxybutanoate to phosphohydroxythreonine. The protein is Phosphoserine aminotransferase of Nocardioides sp. (strain ATCC BAA-499 / JS614).